Reading from the N-terminus, the 623-residue chain is DNA-directed RNA polymerase subunit beta' (623 aa).

Zn(2+) contacts are provided by Cys-70, Cys-72, Cys-85, and Cys-88. Residues Asp-466, Asp-468, and Asp-470 each coordinate Mg(2+).

This sequence belongs to the RNA polymerase beta' chain family. RpoC1 subfamily. In terms of assembly, in plastids the minimal PEP RNA polymerase catalytic core is composed of four subunits: alpha, beta, beta', and beta''. When a (nuclear-encoded) sigma factor is associated with the core the holoenzyme is formed, which can initiate transcription. It depends on Mg(2+) as a cofactor. The cofactor is Zn(2+).

The protein localises to the plastid. It is found in the chloroplast. It carries out the reaction RNA(n) + a ribonucleoside 5'-triphosphate = RNA(n+1) + diphosphate. Its function is as follows. DNA-dependent RNA polymerase catalyzes the transcription of DNA into RNA using the four ribonucleoside triphosphates as substrates. The polypeptide is DNA-directed RNA polymerase subunit beta' (Guillardia theta (Cryptophyte)).